A 302-amino-acid polypeptide reads, in one-letter code: Putative receptor-like protein 16 (302 aa).

LRR repeat units lie at residues 1 to 19 (MNLT…LGNM), 20 to 43 (EMIE…FLKG), and 45 to 70 (DSLI…NFFS). An LRR 4; degenerate repeat occupies 72–91 (LELSMDNNLFTGKIGRGLQS). LRR repeat units lie at residues 92–115 (LRSL…WFDQ), 116–140 (LQDL…LFNM), 142–164 (SLQL…ISGY), 166–188 (ALKV…LLGK), 190–211 (IIVL…INTQ), 213–234 (IRIL…LCAV), and 235–258 (RSIH…LRNA).

Belongs to the RLP family.

This is Putative receptor-like protein 16 from Arabidopsis thaliana (Mouse-ear cress).